The sequence spans 920 residues: Periplasmic nitrate reductase (920 aa).

Residues 1-29 (MNRRDFIKSTAAAAACASAGIALPANLNA) constitute a signal peptide (tat-type signal). In terms of domain architecture, 4Fe-4S Mo/W bis-MGD-type spans 35-91 (WRWDKAVCRFCGTGCGIMVATKNGKIVAVKGDPEAPVNRGLNCIKGYFNAKIMYGDD). [4Fe-4S] cluster contacts are provided by C42, C45, C49, and C77. Mo-bis(molybdopterin guanine dinucleotide)-binding positions include K79, Q147, N172, C176, 209–216 (WGANMAEM), M416, Q420, N526, 551–552 (SD), K574, D601, and 810–819 (TGRVLEHWHS). Residue W886 coordinates substrate. Positions 894 and 911 each coordinate Mo-bis(molybdopterin guanine dinucleotide).

It belongs to the prokaryotic molybdopterin-containing oxidoreductase family. NasA/NapA/NarB subfamily. Component of the periplasmic nitrate reductase NapAB complex composed of NapA and NapB. The cofactor is [4Fe-4S] cluster. Requires Mo-bis(molybdopterin guanine dinucleotide) as cofactor. In terms of processing, predicted to be exported by the Tat system. The position of the signal peptide cleavage has not been experimentally proven.

It is found in the periplasm. It carries out the reaction 2 Fe(II)-[cytochrome] + nitrate + 2 H(+) = 2 Fe(III)-[cytochrome] + nitrite + H2O. In terms of biological role, catalytic subunit of the periplasmic nitrate reductase complex NapAB. Receives electrons from NapB and catalyzes the reduction of nitrate to nitrite. This Campylobacter hominis (strain ATCC BAA-381 / DSM 21671 / CCUG 45161 / LMG 19568 / NCTC 13146 / CH001A) protein is Periplasmic nitrate reductase.